The chain runs to 327 residues: Aspartate carbamoyltransferase catalytic subunit (327 aa).

Arg67 and Thr68 together coordinate carbamoyl phosphate. Lys95 contributes to the L-aspartate binding site. Arg117, His145, and Gln148 together coordinate carbamoyl phosphate. 2 residues coordinate L-aspartate: Arg178 and Arg232. Carbamoyl phosphate-binding residues include Gly273 and Pro274.

This sequence belongs to the aspartate/ornithine carbamoyltransferase superfamily. ATCase family. As to quaternary structure, heterododecamer (2C3:3R2) of six catalytic PyrB chains organized as two trimers (C3), and six regulatory PyrI chains organized as three dimers (R2).

The catalysed reaction is carbamoyl phosphate + L-aspartate = N-carbamoyl-L-aspartate + phosphate + H(+). It functions in the pathway pyrimidine metabolism; UMP biosynthesis via de novo pathway; (S)-dihydroorotate from bicarbonate: step 2/3. Its function is as follows. Catalyzes the condensation of carbamoyl phosphate and aspartate to form carbamoyl aspartate and inorganic phosphate, the committed step in the de novo pyrimidine nucleotide biosynthesis pathway. This Parvibaculum lavamentivorans (strain DS-1 / DSM 13023 / NCIMB 13966) protein is Aspartate carbamoyltransferase catalytic subunit.